The chain runs to 357 residues: Phosphoribosylformylglycinamidine cyclo-ligase (357 aa).

The protein belongs to the AIR synthase family.

The protein resides in the cytoplasm. It catalyses the reaction 2-formamido-N(1)-(5-O-phospho-beta-D-ribosyl)acetamidine + ATP = 5-amino-1-(5-phospho-beta-D-ribosyl)imidazole + ADP + phosphate + H(+). Its pathway is purine metabolism; IMP biosynthesis via de novo pathway; 5-amino-1-(5-phospho-D-ribosyl)imidazole from N(2)-formyl-N(1)-(5-phospho-D-ribosyl)glycinamide: step 2/2. The chain is Phosphoribosylformylglycinamidine cyclo-ligase from Rhizobium johnstonii (strain DSM 114642 / LMG 32736 / 3841) (Rhizobium leguminosarum bv. viciae).